The following is a 694-amino-acid chain: Ferric reductase transmembrane component 5 (694 aa).

Residues 1-19 (MLFARLVLLLVYLAPGSLA) form the signal peptide. The Extracellular segment spans residues 20–163 (KPASTKKRTQ…LDNIDKGNVY (144 aa)). N-linked (GlcNAc...) asparagine glycosylation occurs at asparagine 117. A helical membrane pass occupies residues 164–184 (GVTICLYWIGVLFIAAVYHFL). At 185–222 (NFSRLKQTVFKNKVSAFLRGHYVLPALVHNHAMSVGRW) the chain is on the cytoplasmic side. The helical transmembrane segment at 223–243 (FFIGLVPTRLETLVLFGYVLL) threads the bilayer. At 244-267 (HGFLLSSYNFDHNELLSDRRSQVL) the chain is on the extracellular side. The chain crosses the membrane as a helical span at residues 268–288 (IFLSDRAGILAFAHFPLIVLF). The Ferric oxidoreductase domain maps to 274–408 (AGILAFAHFP…GWGEWIMACA (135 aa)). The Cytoplasmic segment spans residues 289–311 (GGKNSTMTWLTGIRYTAFITYHK). Residues histidine 310 and histidine 324 each coordinate heme. Residues 312–334 (WLGRFMLVDCTIHAIGYTYHAYI) traverse the membrane as a helical segment. Topologically, residues 335–347 (ENYWKYVKYSDLW) are extracellular. The helical transmembrane segment at 348 to 368 (TSGRHAMIIVGILVFFSFFFF) threads the bilayer. Residues 369 to 371 (RRH) are Cytoplasmic-facing. The chain crosses the membrane as a helical span at residues 372 to 392 (YYELFVITHIILAIGFFHACW). Heme contacts are provided by histidine 380 and histidine 394. Residues 393 to 403 (KHCYKLGWGEW) are Extracellular-facing. Residues 404-424 (IMACALFWIADRILRLIKIAI) form a helical membrane-spanning segment. In terms of domain architecture, FAD-binding FR-type spans 409–528 (LFWIADRILR…EGPYGQSTRT (120 aa)). Topologically, residues 425 to 694 (FGMPWAKLKL…IEYVEEFQNW (270 aa)) are cytoplasmic. FAD is bound at residue 473–479 (HPFTVMD). Residues 520–523 (GPYG) and 660–661 (CG) each bind NADP(+).

It belongs to the ferric reductase (FRE) family. Requires FAD as cofactor.

Its subcellular location is the cell membrane. The catalysed reaction is 2 a Fe(II)-siderophore + NADP(+) + H(+) = 2 a Fe(III)-siderophore + NADPH. Metalloreductase responsible for reducing extracellular iron and copper prior to import. Catalyzes the reductive uptake of Fe(3+)-salts and Fe(3+) bound to catecholate or hydroxamate siderophores. Fe(3+) is reduced to Fe(2+), which then dissociates from the siderophore and can be imported by the high-affinity Fe(2+) transport complex in the plasma membrane. The chain is Ferric reductase transmembrane component 5 (FRE5) from Saccharomyces cerevisiae (strain ATCC 204508 / S288c) (Baker's yeast).